The chain runs to 57 residues: Large ribosomal subunit protein bL32B (57 aa).

The protein belongs to the bacterial ribosomal protein bL32 family.

The chain is Large ribosomal subunit protein bL32B (rpmF2) from Listeria innocua serovar 6a (strain ATCC BAA-680 / CLIP 11262).